Consider the following 529-residue polypeptide: Bifunctional purine biosynthesis protein PurH (529 aa).

Positions 2–149 constitute an MGS-like domain; it reads TNLVPVGRAL…KNHRFVNVVT (148 aa).

The protein belongs to the PurH family.

It carries out the reaction (6R)-10-formyltetrahydrofolate + 5-amino-1-(5-phospho-beta-D-ribosyl)imidazole-4-carboxamide = 5-formamido-1-(5-phospho-D-ribosyl)imidazole-4-carboxamide + (6S)-5,6,7,8-tetrahydrofolate. It catalyses the reaction IMP + H2O = 5-formamido-1-(5-phospho-D-ribosyl)imidazole-4-carboxamide. Its pathway is purine metabolism; IMP biosynthesis via de novo pathway; 5-formamido-1-(5-phospho-D-ribosyl)imidazole-4-carboxamide from 5-amino-1-(5-phospho-D-ribosyl)imidazole-4-carboxamide (10-formyl THF route): step 1/1. It functions in the pathway purine metabolism; IMP biosynthesis via de novo pathway; IMP from 5-formamido-1-(5-phospho-D-ribosyl)imidazole-4-carboxamide: step 1/1. The chain is Bifunctional purine biosynthesis protein PurH from Cereibacter sphaeroides (strain ATCC 17025 / ATH 2.4.3) (Rhodobacter sphaeroides).